A 418-amino-acid chain; its full sequence is MKAEIIAVGTEILTGQIVNTNAQFLSEKLAEIGVDVYFQTAVGDNEVRLLSLLEIASQRSSLVILTGGLGPTEDDLTKQTLAKFLGKALVFDPQAQEKLDIFFALRPDYARTPNNERQAQIVEGAIPLPNETGLAVGGKLEVDGVTYVVLPGPPSELKPMVLNQLLPKLMTGNKLYSRVLRFFGIGESQLVTILADLIDNQIDPTLAPYAKTGEVTLRLSTKASSQEEANQALDILENQILDCQTFEGISLRDFCYGYGEETSLASIVVEELKRQGKTIAAAESLTAGLFQATVANFSGVSSIFEGGFVTYSLEEKSRMLDIPAKNLEEHGVVSEFTAQKMAEQARSKTQSDFGISLTGVAGPDSLEGHPVGTVFIGLAQDQGTEVIKVNIGGRSRADVRHIAVMHAFNLVRKALLSD.

This sequence belongs to the CinA family.

The protein is Putative competence-damage inducible protein of Streptococcus pneumoniae serotype 19F (strain G54).